We begin with the raw amino-acid sequence, 471 residues long: tRNA-2-methylthio-N(6)-dimethylallyladenosine synthase (471 aa).

An MTTase N-terminal domain is found at 36-154 (KTYHIITYGC…FPQLLYKAIT (119 aa)). [4Fe-4S] cluster-binding residues include cysteine 45, cysteine 81, cysteine 115, cysteine 191, cysteine 195, and cysteine 198. A Radical SAM core domain is found at 177 to 407 (RREGVSAFVN…VKLVEEIALK (231 aa)). The TRAM domain maps to 410-471 (QQMLGKVCEI…SRHWLYGEVI (62 aa)).

The protein belongs to the methylthiotransferase family. MiaB subfamily. Monomer. Requires [4Fe-4S] cluster as cofactor.

It localises to the cytoplasm. It carries out the reaction N(6)-dimethylallyladenosine(37) in tRNA + (sulfur carrier)-SH + AH2 + 2 S-adenosyl-L-methionine = 2-methylsulfanyl-N(6)-dimethylallyladenosine(37) in tRNA + (sulfur carrier)-H + 5'-deoxyadenosine + L-methionine + A + S-adenosyl-L-homocysteine + 2 H(+). Its function is as follows. Catalyzes the methylthiolation of N6-(dimethylallyl)adenosine (i(6)A), leading to the formation of 2-methylthio-N6-(dimethylallyl)adenosine (ms(2)i(6)A) at position 37 in tRNAs that read codons beginning with uridine. The sequence is that of tRNA-2-methylthio-N(6)-dimethylallyladenosine synthase from Caldicellulosiruptor saccharolyticus (strain ATCC 43494 / DSM 8903 / Tp8T 6331).